Consider the following 229-residue polypeptide: MAKKSKNLRAALEKIDSTKAYSVEEAVALAKETNFAKFDATVEVSYNLNIDVKKADQQIRGAMVLPAGTGKTSRVLVFARGAKAEEAKAAGADFVGEDDLVAKIQGGWLDFDVVIATPDMMALVGRLGRVLGPRNLMPNPKTGTVTMDVAKAVEESKGGKITYRADKAGNVQALIGKVSFDDAKLVDNFKAFNDVIVKAKPATAKGTYITNLSITTTQGVGIKVDPNSL.

The protein belongs to the universal ribosomal protein uL1 family. Part of the 50S ribosomal subunit.

Binds directly to 23S rRNA. The L1 stalk is quite mobile in the ribosome, and is involved in E site tRNA release. Functionally, protein L1 is also a translational repressor protein, it controls the translation of the L11 operon by binding to its mRNA. The sequence is that of Large ribosomal subunit protein uL1 from Streptococcus agalactiae serotype Ia (strain ATCC 27591 / A909 / CDC SS700).